Consider the following 102-residue polypeptide: Envelope protein US9 (102 aa).

The Intravirion portion of the chain corresponds to 1–75; sequence MAGQNTMEGE…KIYHRKKFCY (75 aa). The Di-leucine internalization motif motif lies at 14-15; that stretch reads LL. Positions 41–55 are acidic; it reads EKCYYSDSENETADE. S46 and S48 each carry phosphoserine; by host CK2. A helical; Signal-anchor for type II membrane protein transmembrane segment spans residues 76 to 96; sequence ITLIIVFVFAMTGAAFALGYI. Residues 97 to 102 lie on the Virion surface side of the membrane; it reads TSQFVG.

Belongs to the alphaherpesvirinae envelope protein US9 family. Post-translationally, phosphorylated on serines within the acidic cluster, possibly by host CK2. Phosphorylation determines whether endocytosed viral US9 traffics to the trans-Golgi network or recycles to the cell membrane.

It localises to the virion membrane. It is found in the host Golgi apparatus membrane. The protein localises to the host Golgi apparatus. Its subcellular location is the host trans-Golgi network. The protein resides in the host cell membrane. Its function is as follows. Essential for the anterograde spread of the infection throughout the host nervous system. Together with the gE/gI heterodimer, US9 is involved in the sorting and transport of viral structural components toward axon tips. The sequence is that of Envelope protein US9 from Varicella-zoster virus (strain Dumas) (HHV-3).